The following is a 206-amino-acid chain: Small ribosomal subunit protein uS4 (206 aa).

The S4 RNA-binding domain occupies 96–156; sequence GRLDNVVYRM…EKSKKQARIK (61 aa).

Belongs to the universal ribosomal protein uS4 family. As to quaternary structure, part of the 30S ribosomal subunit. Contacts protein S5. The interaction surface between S4 and S5 is involved in control of translational fidelity.

One of the primary rRNA binding proteins, it binds directly to 16S rRNA where it nucleates assembly of the body of the 30S subunit. Its function is as follows. With S5 and S12 plays an important role in translational accuracy. The protein is Small ribosomal subunit protein uS4 of Pasteurella multocida (strain Pm70).